A 495-amino-acid polypeptide reads, in one-letter code: Heat stress transcription factor A-1a (495 aa).

A DNA-binding region spans residues 50–144 (PPPFLSKTYD…LLKKISRRKS (95 aa)). The interval 140-164 (SRRKSVQGHGSSSSNPQSQQLSQGQ) is disordered. The segment covering 146-164 (QGHGSSSSNPQSQQLSQGQ) has biased composition (low complexity). The tract at residues 172–238 (SCVEVGKFGL…QIMSFLAKAV (67 aa)) is hydrophobic repeat HR-A/B. The segment at 255–288 (NMHVTEANKKRRLREDSTAATESNSHSHSLEASD) is disordered. Residues 262 to 268 (NKKRRLR) carry the Nuclear localization signal motif. Positions 272–281 (TAATESNSHS) are enriched in polar residues. The short motif at 433 to 442 (FEFLEEYMPE) is the AHA element. Residues 445–477 (VFGDATTLENNNNNNNNNNNNNNNNNNNNTNGR) form a disordered region. Positions 454–473 (NNNNNNNNNNNNNNNNNNNN) are enriched in low complexity. Positions 482-489 (LIEELGLL) match the Nuclear export signal motif.

It belongs to the HSF family. Class A subfamily. As to quaternary structure, homotrimer. Interacts with HSP70-1 and HSP70-4. Binds to CRK1. Binds to HSBP. Exhibits temperature-dependent phosphorylation. Phosphorylated by CRK1. In terms of tissue distribution, constitutively expressed.

The protein resides in the cytoplasm. It localises to the nucleus. Its function is as follows. Transcriptional activator that specifically binds DNA sequence 5'-AGAAnnTTCT-3' known as heat shock promoter elements (HSE). The chain is Heat stress transcription factor A-1a (HSFA1A) from Arabidopsis thaliana (Mouse-ear cress).